A 624-amino-acid polypeptide reads, in one-letter code: tRNA uridine 5-carboxymethylaminomethyl modification enzyme MnmG (624 aa).

Residues 13 to 18 (GGGHAG), Val125, and Ser180 each bind FAD. 273–287 (GPRYCPSIEDKIVRF) lines the NAD(+) pocket. FAD is bound at residue Gln370.

Belongs to the MnmG family. Homodimer. Heterotetramer of two MnmE and two MnmG subunits. FAD is required as a cofactor.

It localises to the cytoplasm. Functionally, NAD-binding protein involved in the addition of a carboxymethylaminomethyl (cmnm) group at the wobble position (U34) of certain tRNAs, forming tRNA-cmnm(5)s(2)U34. In Legionella pneumophila subsp. pneumophila (strain Philadelphia 1 / ATCC 33152 / DSM 7513), this protein is tRNA uridine 5-carboxymethylaminomethyl modification enzyme MnmG.